The sequence spans 171 residues: UPF0398 protein spyM18_1659 (171 aa).

This sequence belongs to the UPF0398 family.

This chain is UPF0398 protein spyM18_1659, found in Streptococcus pyogenes serotype M18 (strain MGAS8232).